The chain runs to 453 residues: Protein FAM222A (453 aa).

It belongs to the FAM222 family.

This Mus musculus (Mouse) protein is Protein FAM222A (Fam222a).